The chain runs to 443 residues: Xaa-Pro dipeptidase (443 aa).

5 residues coordinate Mn(2+): aspartate 246, aspartate 257, histidine 339, glutamate 384, and glutamate 423.

The protein belongs to the peptidase M24B family. Bacterial-type prolidase subfamily. It depends on Mn(2+) as a cofactor.

It catalyses the reaction Xaa-L-Pro dipeptide + H2O = an L-alpha-amino acid + L-proline. Functionally, splits dipeptides with a prolyl residue in the C-terminal position. This chain is Xaa-Pro dipeptidase, found in Escherichia coli (strain SMS-3-5 / SECEC).